The following is a 278-amino-acid chain: Large ribosomal subunit protein uL2 (278 aa).

2 disordered regions span residues 33–57 and 224–278; these read LIRPLHGTGGRNAHGRITTRHKGGG and VVMN…GKKR. The span at 45-57 shows a compositional bias: basic residues; sequence AHGRITTRHKGGG. Over residues 253–268 the composition is skewed to basic and acidic residues; that stretch reads PEGRTRKPNKASDKLI. Residues 269–278 are compositionally biased toward basic residues; it reads VRRRRTGKKR.

Belongs to the universal ribosomal protein uL2 family. As to quaternary structure, part of the 50S ribosomal subunit. Forms a bridge to the 30S subunit in the 70S ribosome.

One of the primary rRNA binding proteins. Required for association of the 30S and 50S subunits to form the 70S ribosome, for tRNA binding and peptide bond formation. It has been suggested to have peptidyltransferase activity; this is somewhat controversial. Makes several contacts with the 16S rRNA in the 70S ribosome. This chain is Large ribosomal subunit protein uL2, found in Mycobacteroides abscessus (strain ATCC 19977 / DSM 44196 / CCUG 20993 / CIP 104536 / JCM 13569 / NCTC 13031 / TMC 1543 / L948) (Mycobacterium abscessus).